A 292-amino-acid polypeptide reads, in one-letter code: tRNA-cytidine(32) 2-sulfurtransferase (292 aa).

The PP-loop motif motif lies at 54–59 (SGGKDS). Residues Cys-129, Cys-132, and Cys-220 each coordinate [4Fe-4S] cluster.

This sequence belongs to the TtcA family. In terms of assembly, homodimer. It depends on Mg(2+) as a cofactor. Requires [4Fe-4S] cluster as cofactor.

The protein resides in the cytoplasm. It carries out the reaction cytidine(32) in tRNA + S-sulfanyl-L-cysteinyl-[cysteine desulfurase] + AH2 + ATP = 2-thiocytidine(32) in tRNA + L-cysteinyl-[cysteine desulfurase] + A + AMP + diphosphate + H(+). It participates in tRNA modification. Functionally, catalyzes the ATP-dependent 2-thiolation of cytidine in position 32 of tRNA, to form 2-thiocytidine (s(2)C32). The sulfur atoms are provided by the cysteine/cysteine desulfurase (IscS) system. The chain is tRNA-cytidine(32) 2-sulfurtransferase from Cereibacter sphaeroides (strain ATCC 17025 / ATH 2.4.3) (Rhodobacter sphaeroides).